We begin with the raw amino-acid sequence, 392 residues long: Meiotically up-regulated gene 11 protein (392 aa).

It is found in the cytoplasm. The protein localises to the nucleus. Its function is as follows. Has a role in meiosis. This chain is Meiotically up-regulated gene 11 protein (mug11), found in Schizosaccharomyces pombe (strain 972 / ATCC 24843) (Fission yeast).